The chain runs to 127 residues: Small ribosomal subunit protein uS13 (127 aa).

Residues 97–127 (PVRGQRTRTNARTRRGRRVTVAGKKKAPSKK) form a disordered region. The span at 101–127 (QRTRTNARTRRGRRVTVAGKKKAPSKK) shows a compositional bias: basic residues.

It belongs to the universal ribosomal protein uS13 family. In terms of assembly, part of the 30S ribosomal subunit. Forms a loose heterodimer with protein S19. Forms two bridges to the 50S subunit in the 70S ribosome.

In terms of biological role, located at the top of the head of the 30S subunit, it contacts several helices of the 16S rRNA. In the 70S ribosome it contacts the 23S rRNA (bridge B1a) and protein L5 of the 50S subunit (bridge B1b), connecting the 2 subunits; these bridges are implicated in subunit movement. Contacts the tRNAs in the A and P-sites. In Microcystis aeruginosa (strain NIES-843 / IAM M-2473), this protein is Small ribosomal subunit protein uS13.